A 429-amino-acid polypeptide reads, in one-letter code: Enolase (429 aa).

Glutamine 164 is a (2R)-2-phosphoglycerate binding site. Glutamate 206 functions as the Proton donor in the catalytic mechanism. Aspartate 243, glutamate 286, and aspartate 313 together coordinate Mg(2+). (2R)-2-phosphoglycerate-binding residues include lysine 338, arginine 367, serine 368, and lysine 389. Residue lysine 338 is the Proton acceptor of the active site.

This sequence belongs to the enolase family. Requires Mg(2+) as cofactor.

It localises to the cytoplasm. The protein localises to the secreted. Its subcellular location is the cell surface. It carries out the reaction (2R)-2-phosphoglycerate = phosphoenolpyruvate + H2O. The protein operates within carbohydrate degradation; glycolysis; pyruvate from D-glyceraldehyde 3-phosphate: step 4/5. Its function is as follows. Catalyzes the reversible conversion of 2-phosphoglycerate (2-PG) into phosphoenolpyruvate (PEP). It is essential for the degradation of carbohydrates via glycolysis. The polypeptide is Enolase (Thermosipho africanus (strain TCF52B)).